The sequence spans 349 residues: Isopentenyl-diphosphate delta-isomerase (349 aa).

7 to 8 (RK) contributes to the substrate binding site. Residues S65, 66 to 68 (SMT), S96, and N124 each bind FMN. 96 to 98 (SQR) contributes to the substrate binding site. Q159 is a binding site for substrate. A Mg(2+)-binding site is contributed by E160. Residues K191, T221, 271 to 273 (GIR), and 292 to 293 (AA) contribute to the FMN site.

It belongs to the IPP isomerase type 2 family. Homooctamer. Dimer of tetramers. FMN is required as a cofactor. It depends on NADPH as a cofactor. Requires Mg(2+) as cofactor.

The protein localises to the cytoplasm. The enzyme catalyses isopentenyl diphosphate = dimethylallyl diphosphate. Its function is as follows. Involved in the biosynthesis of isoprenoids. Catalyzes the 1,3-allylic rearrangement of the homoallylic substrate isopentenyl (IPP) to its allylic isomer, dimethylallyl diphosphate (DMAPP). The polypeptide is Isopentenyl-diphosphate delta-isomerase (Synechocystis sp. (strain ATCC 27184 / PCC 6803 / Kazusa)).